We begin with the raw amino-acid sequence, 488 residues long: L-arabinose isomerase 2 (488 aa).

Mn(2+)-binding residues include Glu-306, Glu-331, His-348, and His-447.

The protein belongs to the arabinose isomerase family. Mn(2+) is required as a cofactor.

The catalysed reaction is beta-L-arabinopyranose = L-ribulose. The protein operates within carbohydrate degradation; L-arabinose degradation via L-ribulose; D-xylulose 5-phosphate from L-arabinose (bacterial route): step 1/3. Functionally, catalyzes the conversion of L-arabinose to L-ribulose. This is L-arabinose isomerase 2 from Clostridium acetobutylicum (strain ATCC 824 / DSM 792 / JCM 1419 / IAM 19013 / LMG 5710 / NBRC 13948 / NRRL B-527 / VKM B-1787 / 2291 / W).